The following is a 270-amino-acid chain: Phosphonates import ATP-binding protein PhnC 2 (270 aa).

Residues 2–245 (LVVEGLTCRF…IARELYDLEA (244 aa)) form the ABC transporter domain. Residue 34–41 (GRSGAGKS) coordinates ATP.

The protein belongs to the ABC transporter superfamily. Phosphonates importer (TC 3.A.1.9.1) family. In terms of assembly, the complex is composed of two ATP-binding proteins (PhnC), two transmembrane proteins (PhnE) and a solute-binding protein (PhnD).

The protein localises to the cell inner membrane. It catalyses the reaction phosphonate(out) + ATP + H2O = phosphonate(in) + ADP + phosphate + H(+). Functionally, part of the ABC transporter complex PhnCDE involved in phosphonates import. Responsible for energy coupling to the transport system. In Rhodopseudomonas palustris (strain BisA53), this protein is Phosphonates import ATP-binding protein PhnC 2.